The primary structure comprises 142 residues: Hemoglobin subunit alpha-A (142 aa).

Positions 2–142 (VLSANDKTNV…VGNVLTAKYR (141 aa)) constitute a Globin domain. His-59 serves as a coordination point for O2. Position 88 (His-88) interacts with heme b.

It belongs to the globin family. In terms of assembly, heterotetramer of two alpha chains and two beta chains. In terms of tissue distribution, red blood cells.

Its function is as follows. Involved in oxygen transport from the lung to the various peripheral tissues. This is Hemoglobin subunit alpha-A (HBAA) from Aegypius monachus (Cinereous vulture).